The sequence spans 350 residues: Patr class I histocompatibility antigen, alpha chain E (350 aa).

The signal sequence occupies residues 1–21; the sequence is MVDGTLLLLLSEALALTQTWA. An alpha-1 region spans residues 22–111; it reads GSHSLKYFHT…LRGYYNQSEA (90 aa). At 22-305 the chain is on the extracellular side; sequence GSHSLKYFHT…KPASQPTIPI (284 aa). An N-linked (GlcNAc...) asparagine glycan is attached at Asn107. The alpha-2 stretch occupies residues 112 to 203; that stretch reads GSHTLQWMHG…EKGKETLLHL (92 aa). 2 cysteine pairs are disulfide-bonded: Cys122–Cys185 and Cys224–Cys280. Residues 204 to 295 form an alpha-3 region; the sequence is EPPKTHVTHH…GLPEPLTLRW (92 aa). Residues 206–294 enclose the Ig-like C1-type domain; the sequence is PKTHVTHHPI…EGLPEPLTLR (89 aa). Residues 296–305 are connecting peptide; sequence KPASQPTIPI. The helical transmembrane segment at 306-329 threads the bilayer; that stretch reads VGIIAGLVLLGSVVSGAVVAAVMW. Topologically, residues 330–350 are cytoplasmic; that stretch reads RKKSSGGKGRSYSKAEWSDSA.

The protein belongs to the MHC class I family. Heterodimer of an alpha chain and a beta chain (beta-2-microglobulin).

Its subcellular location is the membrane. Preferably binds to a peptide derived from the signal sequence of most HLA-A, -B, -C and -G molecules. This is Patr class I histocompatibility antigen, alpha chain E (Patr-E) from Pan troglodytes (Chimpanzee).